Consider the following 298-residue polypeptide: Ribosomal RNA small subunit methyltransferase A (298 aa).

Positions 35, 37, 62, 83, 108, and 133 each coordinate S-adenosyl-L-methionine.

Belongs to the class I-like SAM-binding methyltransferase superfamily. rRNA adenine N(6)-methyltransferase family. RsmA subfamily.

It is found in the cytoplasm. It carries out the reaction adenosine(1518)/adenosine(1519) in 16S rRNA + 4 S-adenosyl-L-methionine = N(6)-dimethyladenosine(1518)/N(6)-dimethyladenosine(1519) in 16S rRNA + 4 S-adenosyl-L-homocysteine + 4 H(+). Specifically dimethylates two adjacent adenosines (A1518 and A1519) in the loop of a conserved hairpin near the 3'-end of 16S rRNA in the 30S particle. May play a critical role in biogenesis of 30S subunits. This is Ribosomal RNA small subunit methyltransferase A from Streptococcus pyogenes serotype M4 (strain MGAS10750).